Here is a 396-residue protein sequence, read N- to C-terminus: Probable splicing factor YJU2B (396 aa).

The interval 1–26 (MGERKGVNKYYPPDFNPEKHGSLNRY) is disordered. Ser-40 bears the Phosphoserine mark. Positions 182-214 (LNSMLRRRFREKKKAIQEEEERDQALQAKASLT) form a coiled coil. The interval 295–396 (IVRRRSRDVP…VADYSDSESE (102 aa)) is disordered. Residue Ser-306 is modified to Phosphoserine. Positions 315–327 (KSGEPRVPEEAAQ) are enriched in basic and acidic residues. Residues 340–350 (TTETPKCSSPR) show a composition bias toward polar residues. Residue Ser-362 is modified to Phosphoserine.

Belongs to the CWC16 family.

It localises to the nucleus. In terms of biological role, may be involved in mRNA splicing. The sequence is that of Probable splicing factor YJU2B from Homo sapiens (Human).